Here is a 66-residue protein sequence, read N- to C-terminus: Large ribosomal subunit protein bL35 (66 aa).

Over residues 1 to 26 the composition is skewed to basic residues; the sequence is MPKMKTHRGAAKRVKRTASGKLKRSR. Residues 1–49 form a disordered region; the sequence is MPKMKTHRGAAKRVKRTASGKLKRSRAFTSHLFANKSTKQKRKLRKASL.

It belongs to the bacterial ribosomal protein bL35 family.

The sequence is that of Large ribosomal subunit protein bL35 from Staphylococcus carnosus (strain TM300).